We begin with the raw amino-acid sequence, 158 residues long: Cyclic pyranopterin monophosphate synthase (158 aa).

Residues 74–76 (MCH) and 112–113 (ME) each bind substrate. The active site involves Asp127.

It belongs to the MoaC family. In terms of assembly, homohexamer; trimer of dimers.

The enzyme catalyses (8S)-3',8-cyclo-7,8-dihydroguanosine 5'-triphosphate = cyclic pyranopterin phosphate + diphosphate. Its pathway is cofactor biosynthesis; molybdopterin biosynthesis. Its function is as follows. Catalyzes the conversion of (8S)-3',8-cyclo-7,8-dihydroguanosine 5'-triphosphate to cyclic pyranopterin monophosphate (cPMP). The sequence is that of Cyclic pyranopterin monophosphate synthase from Helicobacter pylori (strain J99 / ATCC 700824) (Campylobacter pylori J99).